We begin with the raw amino-acid sequence, 732 residues long: mRNA-binding protein puf3 (732 aa).

The segment at 98–123 is disordered; it reads PDSLVSTPTAPSANHHGNPFPNGKQS. The segment covering 100–109 has biased composition (polar residues); that stretch reads SLVSTPTAPS. A PUM-HD domain is found at 376–716; it reads QQSRVLYLFH…HLIMSVERFR (341 aa). 8 Pumilio repeats span residues 396-431, 432-468, 469-504, 505-540, 541-576, 577-611, 612-647, and 655-690; these read DILGNVVLFSTDQHGSRFIQQKLATATEEEREAVFQ, EIASTSCLQLMMDIFGNYVVQKYFEFGNEKQKQILLS, QIKGHVFSLSLQMYGCRVVQKAIEYISPEHQVQLIQ, ELDGHVLDCVCDQNGNHVIQKAIECIDTGHLQFILR, ALRPQIHVLSAHPYGCRVIQRAIEHCHSERKLIIEE, LLPHILKLTQDQYGNYVVQHILRTGSESDKKYIFD, LMIDHLLFLSCHKFASNVVERCISYISDVDRRRILN, and ENCSILMLMMKDKYANYVIQKLLDASPEEERDLLIS.

The protein belongs to the PUF3 family.

It localises to the mitochondrion outer membrane. The protein localises to the cytoplasm. Functionally, RNA-binding protein involved in post-transcriptional regulation. Predominantly binds to mRNAs encoding mitochondrial proteins and localizes them to the vicinity of mitochondria for translation. Regulates mitochondrial biogenesis, motility and morphology. This is mRNA-binding protein puf3 (puf3) from Schizosaccharomyces pombe (strain 972 / ATCC 24843) (Fission yeast).